The following is a 650-amino-acid chain: Fructose-1,6-bisphosphatase class 3 (650 aa).

It belongs to the FBPase class 3 family. It depends on Mn(2+) as a cofactor.

The enzyme catalyses beta-D-fructose 1,6-bisphosphate + H2O = beta-D-fructose 6-phosphate + phosphate. Its pathway is carbohydrate biosynthesis; gluconeogenesis. This chain is Fructose-1,6-bisphosphatase class 3, found in Staphylococcus xylosus.